Here is an 88-residue protein sequence, read N- to C-terminus: Large ribosomal subunit protein bL27 (88 aa).

A disordered region spans residues 1-23 (MAHKKGTGSTRNGRDSNSKRLGV).

It belongs to the bacterial ribosomal protein bL27 family.

This Synechococcus sp. (strain CC9902) protein is Large ribosomal subunit protein bL27.